Here is a 188-residue protein sequence, read N- to C-terminus: NADH-quinone oxidoreductase subunit B (188 aa).

Cys67, Cys68, Cys132, and Cys162 together coordinate [4Fe-4S] cluster.

It belongs to the complex I 20 kDa subunit family. As to quaternary structure, NDH-1 is composed of 14 different subunits. Subunits NuoB, C, D, E, F, and G constitute the peripheral sector of the complex. [4Fe-4S] cluster is required as a cofactor.

The protein localises to the cell inner membrane. The enzyme catalyses a quinone + NADH + 5 H(+)(in) = a quinol + NAD(+) + 4 H(+)(out). Its function is as follows. NDH-1 shuttles electrons from NADH, via FMN and iron-sulfur (Fe-S) centers, to quinones in the respiratory chain. Couples the redox reaction to proton translocation (for every two electrons transferred, four hydrogen ions are translocated across the cytoplasmic membrane), and thus conserves the redox energy in a proton gradient. The protein is NADH-quinone oxidoreductase subunit B of Maricaulis maris (strain MCS10) (Caulobacter maris).